Here is a 359-residue protein sequence, read N- to C-terminus: MSKKKVMVGMSGGVDSSVAAAILLEQGYEVIGATMQIWPDTDEETKLVEGGCCSLSAVDDARSVANKLGIPYYVLNFKDIFEKSVINYFKDEYLKGRTPNPCIACNRFVKFESMLNKALSMGIDYIATGHYAIITYDDNKKRYLLKKSVTQQKDQTYALYNVTQEQLKHILMPIGNFTKEQVRAKAKELGLYVASKPDSQEICFVNDNDYGKFIEENTDKEIKPGYFVDTKGNILGKHRGIIHYTVGQRKGLGIALGKPMYVVRIDAENNTVVLGDENEVYSKELTAYDLNFISIDKLEEPMRVKAKIRYSAKEADAVIYPLEDGKVRVVFDTPQRAVTPGQSVVFYDGDIVVGGGIIQ.

Residues 9–16 (GMSGGVDS) and Met-35 each bind ATP. Cys-105 acts as the Nucleophile in catalysis. A disulfide bridge connects residues Cys-105 and Cys-203. Gly-129 lines the ATP pocket. The interaction with tRNA stretch occupies residues 153–155 (KDQ). Cys-203 serves as the catalytic Cysteine persulfide intermediate. An interaction with tRNA region spans residues 309–310 (RY).

This sequence belongs to the MnmA/TRMU family.

It localises to the cytoplasm. The enzyme catalyses S-sulfanyl-L-cysteinyl-[protein] + uridine(34) in tRNA + AH2 + ATP = 2-thiouridine(34) in tRNA + L-cysteinyl-[protein] + A + AMP + diphosphate + H(+). In terms of biological role, catalyzes the 2-thiolation of uridine at the wobble position (U34) of tRNA, leading to the formation of s(2)U34. The polypeptide is tRNA-specific 2-thiouridylase MnmA (Acetivibrio thermocellus (strain ATCC 27405 / DSM 1237 / JCM 9322 / NBRC 103400 / NCIMB 10682 / NRRL B-4536 / VPI 7372) (Clostridium thermocellum)).